The following is a 432-amino-acid chain: Ribosomal protein uS12 methylthiotransferase RimO (432 aa).

An MTTase N-terminal domain is found at 4–120 (HNVFLLSLGC…LLQAIGAQYR (117 aa)). [4Fe-4S] cluster-binding residues include cysteine 13, cysteine 49, cysteine 83, cysteine 144, cysteine 148, and cysteine 151. Residues 130–359 (LTPPHISYLK…MELQETIAKE (230 aa)) form the Radical SAM core domain. The region spanning 362-429 (QLFEGKELTV…AYELHGTITA (68 aa)) is the TRAM domain.

It belongs to the methylthiotransferase family. RimO subfamily. [4Fe-4S] cluster serves as cofactor.

It localises to the cytoplasm. The catalysed reaction is L-aspartate(89)-[ribosomal protein uS12]-hydrogen + (sulfur carrier)-SH + AH2 + 2 S-adenosyl-L-methionine = 3-methylsulfanyl-L-aspartate(89)-[ribosomal protein uS12]-hydrogen + (sulfur carrier)-H + 5'-deoxyadenosine + L-methionine + A + S-adenosyl-L-homocysteine + 2 H(+). Catalyzes the methylthiolation of an aspartic acid residue of ribosomal protein uS12. The polypeptide is Ribosomal protein uS12 methylthiotransferase RimO (Chlorobium phaeobacteroides (strain DSM 266 / SMG 266 / 2430)).